The primary structure comprises 147 residues: Hemoglobin subunit beta-1 (147 aa).

The Globin domain occupies 3–147 (NLTAKERQLI…IADALGKGYH (145 aa)). 2 residues coordinate heme b: His-64 and His-93.

This sequence belongs to the globin family. In terms of assembly, heterotetramer of two alpha chains and two beta chains. As to expression, red blood cells.

Functionally, involved in oxygen transport from the lung to the various peripheral tissues. The polypeptide is Hemoglobin subunit beta-1 (hbb1) (Xenopus tropicalis (Western clawed frog)).